We begin with the raw amino-acid sequence, 351 residues long: tRNA N6-adenosine threonylcarbamoyltransferase (351 aa).

His-124 and His-128 together coordinate Fe cation. Residues 146–150 (LVSGG), Asp-180, Gly-193, Asp-197, and Asn-285 each bind substrate. Asp-313 contacts Fe cation.

It belongs to the KAE1 / TsaD family. Fe(2+) is required as a cofactor.

Its subcellular location is the cytoplasm. The catalysed reaction is L-threonylcarbamoyladenylate + adenosine(37) in tRNA = N(6)-L-threonylcarbamoyladenosine(37) in tRNA + AMP + H(+). In terms of biological role, required for the formation of a threonylcarbamoyl group on adenosine at position 37 (t(6)A37) in tRNAs that read codons beginning with adenine. Is involved in the transfer of the threonylcarbamoyl moiety of threonylcarbamoyl-AMP (TC-AMP) to the N6 group of A37, together with TsaE and TsaB. TsaD likely plays a direct catalytic role in this reaction. This is tRNA N6-adenosine threonylcarbamoyltransferase from Mycobacterium leprae (strain TN).